We begin with the raw amino-acid sequence, 477 residues long: Myosin-binding protein H (477 aa).

Positions 1-73 (MMEKNTSEGP…APPSEDVPSA (73 aa)) are disordered. Thr6 and Thr26 each carry phosphothreonine. One can recognise a Fibronectin type-III 1 domain in the interval 73–168 (APLLLTLDDV…LDQPIHIREN (96 aa)). The 89-residue stretch at 172 to 260 (PKIRVPRHLR…EDLEAKAVID (89 aa)) folds into the Ig-like C2-type 1 domain. The region spanning 269-364 (PPSSIRLLDV…TKELAHIQKA (96 aa)) is the Fibronectin type-III 2 domain. In terms of domain architecture, Ig-like C2-type 2 spans 382–466 (PSFTQPLADH…INVLGEASVD (85 aa)).

The protein belongs to the immunoglobulin superfamily. MyBP family. Mainly expressed in the skeletal muscle. Slightly expressed in the left atrium and arteria mammaria interna.

Its function is as follows. Binds to myosin; probably involved in interaction with thick myofilaments in the A-band. This Homo sapiens (Human) protein is Myosin-binding protein H (MYBPH).